The chain runs to 521 residues: Histidine--tRNA ligase (521 aa).

L-histidine is bound by residues 137–139 (DLT), arginine 164, glutamine 180, aspartate 184, arginine 338, and 342–343 (YY).

This sequence belongs to the class-II aminoacyl-tRNA synthetase family.

It carries out the reaction tRNA(His) + L-histidine + ATP = L-histidyl-tRNA(His) + AMP + diphosphate + H(+). Its function is as follows. Involved in protein synthesis. Catalyzes the specific attachment of an amino acid to its cognate tRNA in a 2 step reaction: the amino acid (AA) is first activated by ATP to form AA-AMP and then transferred to the acceptor end of the tRNA. Required for germ cell development. The sequence is that of Histidine--tRNA ligase from Caenorhabditis elegans.